The primary structure comprises 366 residues: Histidinol-phosphate aminotransferase 2 (366 aa).

An N6-(pyridoxal phosphate)lysine modification is found at lysine 226.

The protein belongs to the class-II pyridoxal-phosphate-dependent aminotransferase family. Histidinol-phosphate aminotransferase subfamily. In terms of assembly, homodimer. The cofactor is pyridoxal 5'-phosphate.

It carries out the reaction L-histidinol phosphate + 2-oxoglutarate = 3-(imidazol-4-yl)-2-oxopropyl phosphate + L-glutamate. It participates in amino-acid biosynthesis; L-histidine biosynthesis; L-histidine from 5-phospho-alpha-D-ribose 1-diphosphate: step 7/9. This is Histidinol-phosphate aminotransferase 2 from Cupriavidus pinatubonensis (strain JMP 134 / LMG 1197) (Cupriavidus necator (strain JMP 134)).